A 422-amino-acid chain; its full sequence is Tyrosine--tRNA ligase (422 aa).

Position 34 (tyrosine 34) interacts with L-tyrosine. Positions 39-48 (PTEDSLHVGH) match the 'HIGH' region motif. L-tyrosine is bound by residues tyrosine 172 and glutamine 176. The 'KMSKS' region motif lies at 232–236 (KFGKT). Lysine 235 contacts ATP. The S4 RNA-binding domain maps to 354–412 (KDLQEALVLSSLAQSRTQAKNMIISNSISINTKKIVNKNYIIDDNDKLFNQFTLLSRGK).

This sequence belongs to the class-I aminoacyl-tRNA synthetase family. TyrS type 1 subfamily. As to quaternary structure, homodimer.

The protein localises to the cytoplasm. It catalyses the reaction tRNA(Tyr) + L-tyrosine + ATP = L-tyrosyl-tRNA(Tyr) + AMP + diphosphate + H(+). In terms of biological role, catalyzes the attachment of tyrosine to tRNA(Tyr) in a two-step reaction: tyrosine is first activated by ATP to form Tyr-AMP and then transferred to the acceptor end of tRNA(Tyr). In Buchnera aphidicola subsp. Schizaphis graminum (strain Sg), this protein is Tyrosine--tRNA ligase.